The chain runs to 311 residues: Heme A synthase (311 aa).

Residues 1–6 (MQRFIK) are Cytoplasmic-facing. Residues 7-27 (WLAVITSLDLLIVLLGGALVT) form a helical membrane-spanning segment. The Extracellular segment spans residues 28–62 (KTGSGQGCGKSWPLCNGEFVPSNLSMETIIELSHR). The cysteines at positions 35 and 42 are disulfide-linked. Glutamate 58 is an active-site residue. Residue histidine 61 participates in heme o binding. Residues 63 to 83 (LTSGSAGILVTLLCILSWKYY) form a helical membrane-spanning segment. The Cytoplasmic portion of the chain corresponds to 84–91 (KHVRETKT). Residues 92-112 (LAILSFVFLVAQALMGAAAVV) form a helical membrane-spanning segment. Topologically, residues 113–121 (WGQMPAVLA) are extracellular. A helical membrane pass occupies residues 122–142 (IHFGISLISFASVILLTCLIF). Histidine 123 contributes to the heme o binding site. Over 143 to 159 (EIDQKFDARSLIMDKKM) the chain is Cytoplasmic. A helical transmembrane segment spans residues 160–180 (KFHIYGVTIYSYIVVYTGALV). The Extracellular portion of the chain corresponds to 181–211 (RHERASLACPDFPLCSKNRPMPTQLHEWVQM). Cysteine 189 and cysteine 195 are joined by a disulfide. The chain crosses the membrane as a helical span at residues 212–232 (GHRVAAMLIFAWILYAMILAI). Histidine 213 lines the heme b pocket. The Cytoplasmic portion of the chain corresponds to 233–243 (RHYKQQPVVYW). Residues 244–264 (GWIISFILVTLQAVVGVLVVF) form a helical membrane-spanning segment. The Extracellular portion of the chain corresponds to 265–271 (TNASLAM). The helical transmembrane segment at 272–292 (ALLHSLFISCLFAVLCYLVML) threads the bilayer. Position 275 (histidine 275) interacts with heme b. Topologically, residues 293–311 (GTRSKVNAKEAELTSKQTK) are cytoplasmic.

The protein belongs to the COX15/CtaA family. Type 1 subfamily. As to quaternary structure, interacts with CtaB. The cofactor is heme b.

It is found in the cell membrane. It carries out the reaction Fe(II)-heme o + 2 A + H2O = Fe(II)-heme a + 2 AH2. It functions in the pathway porphyrin-containing compound metabolism; heme A biosynthesis; heme A from heme O: step 1/1. Functionally, catalyzes the conversion of heme O to heme A by two successive hydroxylations of the methyl group at C8. The first hydroxylation forms heme I, the second hydroxylation results in an unstable dihydroxymethyl group, which spontaneously dehydrates, resulting in the formyl group of heme A. The polypeptide is Heme A synthase (Bacillus cereus (strain ATCC 14579 / DSM 31 / CCUG 7414 / JCM 2152 / NBRC 15305 / NCIMB 9373 / NCTC 2599 / NRRL B-3711)).